We begin with the raw amino-acid sequence, 264 residues long: MKSKLKLHGFNNLTKTLSFNIYDICYAETPEDQQAYVRYIDEEYDAQRLTQILTDVVDIIGANVLNIARQDYDPQGASVTILISEQPVEPTESQIEESPGPLPETILAHLDKSHITVHTYPEIHPVDGLATFRVDIDVSTCGVISPLKALNYLIHQFDSDIVTVDYRVRGFTRDVEGRKHFIDHEINSIQKYLSADTRAAYQMTDVNVYQENMFHTKMLLKDFDLDNYLFGDATLNLSVEQRKQVEKRLRHEMLEIFYARNMPH.

Ser113 acts as the Schiff-base intermediate with substrate; via pyruvic acid in catalysis. The residue at position 113 (Ser113) is a Pyruvic acid (Ser); by autocatalysis. His118 acts as the Proton acceptor; for processing activity in catalysis. Cys141 serves as the catalytic Proton donor; for catalytic activity.

Belongs to the prokaryotic AdoMetDC family. Type 2 subfamily. As to quaternary structure, heterooctamer of four alpha and four beta chains arranged as a tetramer of alpha/beta heterodimers. Requires pyruvate as cofactor. In terms of processing, is synthesized initially as an inactive proenzyme. Formation of the active enzyme involves a self-maturation process in which the active site pyruvoyl group is generated from an internal serine residue via an autocatalytic post-translational modification. Two non-identical subunits are generated from the proenzyme in this reaction, and the pyruvate is formed at the N-terminus of the alpha chain, which is derived from the carboxyl end of the proenzyme. The post-translation cleavage follows an unusual pathway, termed non-hydrolytic serinolysis, in which the side chain hydroxyl group of the serine supplies its oxygen atom to form the C-terminus of the beta chain, while the remainder of the serine residue undergoes an oxidative deamination to produce ammonia and the pyruvoyl group blocking the N-terminus of the alpha chain.

The catalysed reaction is S-adenosyl-L-methionine + H(+) = S-adenosyl 3-(methylsulfanyl)propylamine + CO2. It functions in the pathway amine and polyamine biosynthesis; S-adenosylmethioninamine biosynthesis; S-adenosylmethioninamine from S-adenosyl-L-methionine: step 1/1. Functionally, catalyzes the decarboxylation of S-adenosylmethionine to S-adenosylmethioninamine (dcAdoMet), the propylamine donor required for the synthesis of the polyamines spermine and spermidine from the diamine putrescine. This Azotobacter vinelandii (strain DJ / ATCC BAA-1303) protein is S-adenosylmethionine decarboxylase proenzyme.